We begin with the raw amino-acid sequence, 196 residues long: Cupin-domain-containing oxidoreductase srdD (196 aa).

The interval 99–165 is cupin-like domain; that stretch reads DFGPGVESPL…GNGTLPGRVM (67 aa).

It belongs to the virC family.

Highly reducing polyketide synthase; part of the gene cluster that mediates the biosynthesis of sordarial, a salicylic aldehyde structurally related to the phytotoxin pyriculol. The most interesting aspect of this pathway is formation of an aromatic product from the highly reducing polyketide synthase srdA. SrdA synthesizes a reduced polyketide chain from one molecule of acetyl-CoA and five molecules of malonyl-CoA. The polyketide chain is then reductively released as an aldehyde. The oxidoreductases srdC, srdD and srdE then oxidize one of the hydroxy groups to facilitate the intramolecular aldol condensation, followed by dehydration to yield a salicylic aldehyde. This aldehyde can undergo facile reduction by endogenous reductases to yield the alcohol 1-hydroxy-2-hydroxymethyl-3-pent-1,3-dienylbenzene. The flavin-dependent srdI counteract against the propensity of the aldehydes to be reduced under physiological conditions and is responsible for reoxidizing 1-hydroxy-2-hydroxymethyl-3-pent-1,3-dienylbenzene back to the salicylic aldehyde. This salicylic aldehyde is then selectively epoxidized by the cupin-domain-containing oxidoreductase srdB to yield the epoxide, which can be hydrolyzed stereoselectively by the hydrolase srdG to give the final product sordarial. This chain is Cupin-domain-containing oxidoreductase srdD, found in Neurospora crassa (strain ATCC 24698 / 74-OR23-1A / CBS 708.71 / DSM 1257 / FGSC 987).